Reading from the N-terminus, the 193-residue chain is Sporulation-specific transcriptional regulator GerR (193 aa).

An HTH myb-type domain is found at 1–61 (MTITRQDAWT…RWNSYVRKQY (61 aa)). The segment at residues 35–57 (FEEVGRALTRTAAACGFRWNSYV) is a DNA-binding region (H-T-H motif). A coiled-coil region spans residues 122 to 177 (AQEFQLEREKLKEQIQSLQKELEDLRSENQTLRNQLEMTEEDYKALIDIMDRARKM).

Belongs to the RsfA transcriptional regulator family.

Functionally, transcriptional factor that regulates the expression of several late sporulation genes. Controls genes of both sigma-E and sigma-K regulons, acting alone on some genes and in conjunction with SpoIIID or GerE on others. Regulates, directly or indirectly, the expression of genes encoding coat proteins such as cgeA, cotB, cotC, cotG, cotU and cotY. Controls late sporulation genes in two ways: directly, by binding to the promoter region of genes such as cotB, cotU and spoVIF, and acting directly on their transcription, and indirectly, through the activation of SpoVIF, which stabilizes the transcriptional activator GerE and consequently induces the expression of the GerE-dependent genes, such as cotC and cotG. Its effect is strongly positive on spoVIF, cotC, and cotG, weakly positive on cotB, and negative on cotU. The protein is Sporulation-specific transcriptional regulator GerR of Bacillus subtilis (strain 168).